We begin with the raw amino-acid sequence, 519 residues long: Glycogen synthase (519 aa).

The tract at residues 1-40 is disordered; the sequence is MISAAVEPHVDAFKPDNREPLTPDFATTGKAPGAQRQHNP. The span at 8–21 shows a compositional bias: basic and acidic residues; it reads PHVDAFKPDNREPL. Lys57 provides a ligand contact to ADP-alpha-D-glucose.

Belongs to the glycosyltransferase 1 family. Bacterial/plant glycogen synthase subfamily.

It catalyses the reaction [(1-&gt;4)-alpha-D-glucosyl](n) + ADP-alpha-D-glucose = [(1-&gt;4)-alpha-D-glucosyl](n+1) + ADP + H(+). It participates in glycan biosynthesis; glycogen biosynthesis. Its function is as follows. Synthesizes alpha-1,4-glucan chains using ADP-glucose. In Pseudomonas putida (strain ATCC 47054 / DSM 6125 / CFBP 8728 / NCIMB 11950 / KT2440), this protein is Glycogen synthase.